A 209-amino-acid polypeptide reads, in one-letter code: Thymidine kinase (209 aa).

ATP contacts are provided by residues 16–23 and 90–93; these read GPMFAGKT and DEAQ. Residue E91 is the Proton acceptor of the active site.

It belongs to the thymidine kinase family. As to quaternary structure, homotetramer.

The protein resides in the cytoplasm. The catalysed reaction is thymidine + ATP = dTMP + ADP + H(+). The polypeptide is Thymidine kinase (Onion yellows phytoplasma (strain OY-M)).